The sequence spans 1044 residues: Translation initiation factor IF-2 (1044 aa).

A disordered region spans residues 55 to 458; sequence EAQEGQGAGK…KRKASAQERR (404 aa). Residues 57–77 are compositionally biased toward low complexity; that stretch reads QEGQGAGKSAAKSAKPAAQPK. The segment covering 104–146 has biased composition (basic and acidic residues); that stretch reads LSEKRERRPLTERRPLAERRPLAERPLVDRPVTERPLAERPAA. 3 stretches are compositionally biased toward low complexity: residues 147-168, 190-231, and 254-265; these read ELRP…AQPV, KAQP…QKPA, and ASSRPASAAPAA. Residues 267-281 are compositionally biased toward basic and acidic residues; it reads GEKRPAAAAERREEP. 2 stretches are compositionally biased toward low complexity: residues 352 to 375 and 383 to 395; these read AAGQ…AGAP and APQR…APLA. Residues 399–444 are compositionally biased toward basic and acidic residues; it reads LDPKVAEQAKAGEGKPRYGQSGDKRRADLYDRREHPSSQPSEEKLF. Positions 546-714 constitute a tr-type G domain; it reads PRHPVVTIMG…ILVLAEVSDL (169 aa). Residues 555–562 form a G1 region; the sequence is GHVDHGKT. Position 555 to 562 (555 to 562) interacts with GTP; it reads GHVDHGKT. A G2 region spans residues 580–584; it reads GITQH. Positions 601-604 are G3; that stretch reads DTPG. GTP contacts are provided by residues 601 to 605 and 655 to 658; these read DTPGH and NKID. The interval 655-658 is G4; it reads NKID. The segment at 691–693 is G5; it reads SAK.

It belongs to the TRAFAC class translation factor GTPase superfamily. Classic translation factor GTPase family. IF-2 subfamily.

It is found in the cytoplasm. Functionally, one of the essential components for the initiation of protein synthesis. Protects formylmethionyl-tRNA from spontaneous hydrolysis and promotes its binding to the 30S ribosomal subunits. Also involved in the hydrolysis of GTP during the formation of the 70S ribosomal complex. The protein is Translation initiation factor IF-2 of Symbiobacterium thermophilum (strain DSM 24528 / JCM 14929 / IAM 14863 / T).